Reading from the N-terminus, the 1185-residue chain is Ovostatin homolog 1 (1185 aa).

The first 21 residues, 1-21 (MHVHVCVCLCVCIYTSSCVCA), serve as a signal peptide directing secretion. Residues Asn80, Asn155, Asn347, Asn452, and Asn725 are each glycosylated (N-linked (GlcNAc...) asparagine).

It belongs to the protease inhibitor I39 (alpha-2-macroglobulin) family. Homotetramer.

The protein resides in the secreted. Is able to inhibit all four classes of proteinases by a unique 'trapping' mechanism. In Homo sapiens (Human), this protein is Ovostatin homolog 1 (OVOS1).